Here is a 606-residue protein sequence, read N- to C-terminus: Endo-beta-1,4-xylanase Xyn10C (606 aa).

Residues 1 to 19 (MKKIQQLLMLSLISSTLIA) form the signal peptide. Cys-20 carries N-palmitoyl cysteine lipidation. A lipid anchor (S-diacylglycerol cysteine) is attached at Cys-20. The tract at residues 23–64 (GGGGGSTPTTSSSPQSSSPASTPSSASSSSIISSSSLSSSLS) is disordered. Over residues 29–64 (TPTTSSSPQSSSPASTPSSASSSSIISSSSLSSSLS) the composition is skewed to low complexity. Positions 91–242 (GNVVIEVDMA…KSVTITLAQE (152 aa)) constitute a CBM15 domain. The a carbohydrate site is built by Asn-106 and Gln-171. The cysteines at positions 183 and 200 are disulfide-linked. Residue Gln-217 participates in a carbohydrate binding. The 352-residue stretch at 245 to 596 (SANVDHLRDL…KPALRGFADA (352 aa)) folds into the GH10 domain. Substrate is bound by residues 296–299 (NIMK), His-332, and Asn-384. Glu-385 acts as the Proton donor in catalysis. Residue Glu-497 is the Nucleophile of the active site. Trp-552 is a binding site for substrate.

The protein belongs to the glycosyl hydrolase 10 (cellulase F) family.

It is found in the cell outer membrane. The enzyme catalyses Endohydrolysis of (1-&gt;4)-beta-D-xylosidic linkages in xylans.. The protein operates within glycan degradation; xylan degradation. Its function is as follows. Endo-acting xylanase which specifically cleaves internal linkages on the xylan backbone, releasing xylooligosaccharides. Is able to hydrolyze oat spelt xylan, the arabinoxylans from wheat and rye, and glucuronoxylan. Also displays very low activity against xylooligosaccharides. During the xylan degradation process, Xyn10C may act on the soluble xylans and long xylooligosaccharides products released by the secreted xylanases Xyn11A, Xyn11B and Xyn10A. The protein is Endo-beta-1,4-xylanase Xyn10C (xyn10C) of Cellvibrio japonicus (Pseudomonas fluorescens subsp. cellulosa).